The chain runs to 132 residues: Interleukin-13 (132 aa).

Positions 1–18 (MALLLTAVIVLICFGGLT) are cleaved as a signal peptide. Asn38, Asn49, Asn57, and Asn75 each carry an N-linked (GlcNAc...) asparagine glycan. Intrachain disulfides connect Cys48/Cys76 and Cys64/Cys90.

This sequence belongs to the IL-4/IL-13 family. In terms of assembly, interacts with IL13RA2.

Its subcellular location is the secreted. Functionally, cytokine that plays important roles in allergic inflammation and immune response to parasite infection. Synergizes with IL2 in regulating interferon-gamma synthesis. Stimulates B-cell proliferation, and activation of eosinophils, basophils, and mast cells. Plays an important role in controlling IL33 activity by modulating the production of transmembrane and soluble forms of interleukin-1 receptor-like 1/IL1RL1. Displays the capacity to antagonize Th1-driven proinflammatory immune response and downregulates synthesis of many proinflammatory cytokines including IL1, IL6, IL10, IL12 and TNF-alpha through a mechanism that partially involves suppression of NF-kappa-B. Also functions on nonhematopoietic cells, including endothelial cells where it induces vascular cell adhesion protein 1/VCAM1, which is important in the recruitment of eosinophils. Exerts its biological effects through its receptors which comprises the IL4R chain and the IL13RA1 chain, to activate JAK1 and TYK2, leading to the activation of STAT6. Aside from IL13RA1, another receptor IL13RA2 acts as a high affinity decoy for IL13 and mediates internalization and depletion of extracellular IL13. This is Interleukin-13 (IL13) from Bos taurus (Bovine).